A 155-amino-acid polypeptide reads, in one-letter code: MRKNRAEKRDVLADPIYNSKLVTRAINKIMLDGKRGTAQTIIYDAFDIIKEKTGEEPIEIFNKAIENIKPHLELKVRRIGGANYQVPVEVSDERQVTLALRWLINYARLRNEKVMTVKLANEIIDASNNMGGSVKKREDTHKMAEANKAFAHYRW.

It belongs to the universal ribosomal protein uS7 family. In terms of assembly, part of the 30S ribosomal subunit. Contacts proteins S9 and S11.

Its function is as follows. One of the primary rRNA binding proteins, it binds directly to 16S rRNA where it nucleates assembly of the head domain of the 30S subunit. Is located at the subunit interface close to the decoding center, probably blocks exit of the E-site tRNA. In Mesoplasma florum (strain ATCC 33453 / NBRC 100688 / NCTC 11704 / L1) (Acholeplasma florum), this protein is Small ribosomal subunit protein uS7.